The sequence spans 180 residues: Cytokinin-beta-glucosidase 2 (180 aa).

Functionally, hydrolyzes cytokinin glucosides thus liberating free cytokinins. The chain is Cytokinin-beta-glucosidase 2 (ROLC2) from Panax ginseng (Korean ginseng).